The sequence spans 123 residues: UPF0102 protein PSEEN4497 (123 aa).

Belongs to the UPF0102 family.

The protein is UPF0102 protein PSEEN4497 of Pseudomonas entomophila (strain L48).